The primary structure comprises 76 residues: Protein krueppel (76 aa).

2 C2H2-type zinc fingers span residues F11–H33 and Y39–H61.

This sequence belongs to the krueppel C2H2-type zinc-finger protein family.

It localises to the nucleus. Its function is as follows. Krueppel is a gap class segmentation protein. In Manduca sexta (Tobacco hawkmoth), this protein is Protein krueppel (Kr).